Consider the following 330-residue polypeptide: 2-oxoisovalerate dehydrogenase subunit alpha (330 aa).

Substrate contacts are provided by residues F44, Y73, 107 to 110 (MPGH), and S123. 72–74 (YYR) contributes to the thiamine diphosphate binding site. Thiamine diphosphate-binding positions include 123-125 (SPV), 153-159 (GEGSSNQ), 183-187 (NKYAI), and H252. Mg(2+) is bound by residues E154, N183, and Y185. A disordered region spans residues 249–272 (LTPHSSDDDDSSYRGREEVEEAKK). Residues 259 to 272 (SSYRGREEVEEAKK) are compositionally biased toward basic and acidic residues.

It belongs to the BCKDHA family. In terms of assembly, heterotetramer of two alpha and two beta chains. Directly associated with ODBB in the E1 complex. Requires thiamine diphosphate as cofactor.

It catalyses the reaction N(6)-[(R)-lipoyl]-L-lysyl-[protein] + 3-methyl-2-oxobutanoate + H(+) = N(6)-[(R)-S(8)-2-methylpropanoyldihydrolipoyl]-L-lysyl-[protein] + CO2. Its function is as follows. The branched-chain alpha-keto dehydrogenase complex catalyzes the overall conversion of alpha-keto acids to acyl-CoA and CO(2). It contains multiple copies of three enzymatic components: branched-chain alpha-keto acid decarboxylase (E1), lipoamide acyltransferase (E2) and lipoamide dehydrogenase (E3). This chain is 2-oxoisovalerate dehydrogenase subunit alpha (bfmBAA), found in Bacillus subtilis (strain 168).